A 360-amino-acid chain; its full sequence is Peptide chain release factor 1 (360 aa).

Q235 carries the N5-methylglutamine modification. A compositionally biased stretch (basic and acidic residues) spans 284–295 (ERQEQAQADTRR). The interval 284 to 309 (ERQEQAQADTRRNLLGSGDRSDKIRT) is disordered.

The protein belongs to the prokaryotic/mitochondrial release factor family. Post-translationally, methylated by PrmC. Methylation increases the termination efficiency of RF1.

It localises to the cytoplasm. In terms of biological role, peptide chain release factor 1 directs the termination of translation in response to the peptide chain termination codons UAG and UAA. The polypeptide is Peptide chain release factor 1 (prfA) (Pasteurella multocida (strain Pm70)).